A 152-amino-acid polypeptide reads, in one-letter code: Transposase for insertion sequence element IS200 (152 aa).

H61 and H63 together coordinate Mg(2+). Y125 acts as the Nucleophile in catalysis. Residue Q129 coordinates Mg(2+).

This sequence belongs to the transposase 17 family. Homodimer. Mg(2+) is required as a cofactor.

In terms of biological role, transposase responsible for transposition of the IS200 insertion sequence (IS) element. Transposition occurs in 2 main steps, excision from the donor DNA 'top strand' into a single strand circle and its subsequent reinsertion into the DNA target. This increases the copy number of the IS. This Salmonella typhi protein is Transposase for insertion sequence element IS200 (tnpA1).